We begin with the raw amino-acid sequence, 192 residues long: Sarcoplasmic calcium-binding protein 1 (192 aa).

Alanine 1 bears the N-acetylalanine mark. 4 consecutive EF-hand domains span residues 4–39 (WDNR…NTLI), 56–91 (IMSN…VCVG), 100–135 (AFKV…RSAF), and 136–171 (ANIK…YAQF). Ca(2+) contacts are provided by aspartate 17, aspartate 19, asparagine 21, aspartate 28, aspartate 69, asparagine 71, aspartate 73, glutamate 75, glutamate 80, aspartate 113, asparagine 115, aspartate 117, and glutamate 124.

As to quaternary structure, SCPs from crayfish, lobster, and shrimp are polymorphic dimers.

Functionally, like parvalbumins, SCPs seem to be more abundant in fast contracting muscles, but no functional relationship can be established from this distribution. In Astacus leptodactylus (Turkish narrow-clawed crayfish), this protein is Sarcoplasmic calcium-binding protein 1.